Consider the following 193-residue polypeptide: Epididymal-specific lipocalin-12 (193 aa).

Positions 1-19 (MGPWWALWLILTLPQILES) are cleaved as a signal peptide. A disulfide bridge links cysteine 88 with cysteine 193. Asparagine 143 and asparagine 172 each carry an N-linked (GlcNAc...) asparagine glycan.

It belongs to the calycin superfamily. Lipocalin family. Monomer. In terms of tissue distribution, expressed in epididymis.

The protein resides in the secreted. Binds all-trans retinoic acid and may act as a retinoid carrier protein within the epididymis. May play a role in male fertility. This chain is Epididymal-specific lipocalin-12 (Lcn12), found in Mus musculus (Mouse).